Reading from the N-terminus, the 132-residue chain is Acyl carrier protein 3, chloroplastic (132 aa).

The N-terminal 49 residues, 1-49 (MASIAGSAVSFAKPVKAINTNSLSFSGARRGNAFLRLQPVPMRFAVCCS), are a transit peptide targeting the chloroplast. A Carrier domain is found at 52 to 127 (QDTVEKVCEI…DAATLIDKLV (76 aa)). Serine 87 carries the post-translational modification O-(pantetheine 4'-phosphoryl)serine.

The protein belongs to the acyl carrier protein (ACP) family. Post-translationally, 4'-phosphopantetheine is transferred from CoA to a specific serine of apo-ACP by acpS. This modification is essential for activity because fatty acids are bound in thioester linkage to the sulfhydryl of the prosthetic group.

The protein localises to the plastid. The protein resides in the chloroplast. Its pathway is lipid metabolism; fatty acid biosynthesis. Its function is as follows. Carrier of the growing fatty acid chain in fatty acid biosynthesis. This chain is Acyl carrier protein 3, chloroplastic (ACL1.3), found in Hordeum vulgare (Barley).